The primary structure comprises 876 residues: MAP7 domain-containing protein 3 (876 aa).

M1 is subject to N-acetylmethionine. Residues 65–144 are a coiled coil; sequence NDIKQRLARE…DEAQKEKFTA (80 aa). Disordered stretches follow at residues 72 to 137 and 170 to 246; these read ARER…KDEA and AMAN…KPRV. The span at 171-183 shows a compositional bias: polar residues; that stretch reads MANSESKTANKRS. S185 is modified (phosphoserine). Residues 191-211 show a composition bias toward polar residues; the sequence is QGTSALIRQMPLSSAGLQNSV. The segment covering 214-244 has biased composition (basic and acidic residues); it reads RKTDKERSSSLNRRDSNLHSSTDKEQAERKP. S322 carries the phosphoserine modification. The interval 407 to 475 is disordered; it reads EAAPEGSLEA…ARDAPKKSEM (69 aa). The span at 425–438 shows a compositional bias: basic and acidic residues; sequence APKESVKGSPKESM. 3 positions are modified to phosphoserine: S441, S457, and S461. Residues 465 to 475 are compositionally biased toward basic and acidic residues; the sequence is KARDAPKKSEM. S490 bears the Phosphoserine mark. Disordered stretches follow at residues 509 to 533, 613 to 697, and 723 to 754; these read SPIS…SKQS, QREK…KKEH, and RKTD…SDKD. The segment covering 510 to 521 has biased composition (polar residues); sequence PISTNRQIQKNC. S524 carries the post-translational modification Phosphoserine. Coiled-coil stretches lie at residues 558 to 640 and 689 to 724; these read VKKK…MAKE and EADK…RTRK. Basic and acidic residues-rich tracts occupy residues 613–639 and 680–697; these read QREK…DMAK and GDAK…KKEH. The span at 742 to 752 shows a compositional bias: acidic residues; sequence EEAEADNEESD. S770 and S817 each carry phosphoserine. Positions 802–876 are disordered; that stretch reads PKTYFNGDLK…LPKSSDTFRQ (75 aa). A compositionally biased stretch (polar residues) spans 820–830; sequence DTSIQEVVSRP. Over residues 831 to 842 the composition is skewed to basic residues; that stretch reads SSKRMTSHTTKT. S832 is modified (phosphoserine). Positions 848-860 are enriched in polar residues; the sequence is TNTTSRSSAQTKS. Residues 861-876 are compositionally biased toward basic and acidic residues; the sequence is EGFHDILPKSSDTFRQ.

The protein belongs to the MAP7 family. As to quaternary structure, interacts (via N-terminus coiled coil domains) with tubulin and microtubules.

Its subcellular location is the cytoplasm. It is found in the cytoskeleton. It localises to the spindle. Functionally, promotes the assembly and stability of microtubules. The polypeptide is MAP7 domain-containing protein 3 (MAP7D3) (Homo sapiens (Human)).